Here is a 1418-residue protein sequence, read N- to C-terminus: Structural maintenance of chromosomes protein 4 (1418 aa).

The disordered stretch occupies residues 1 to 122 (MSDSPLSKRQ…SPGRSPTRRL (122 aa)). Ser-2 is modified (N-acetylserine). Polar residues-rich tracts occupy residues 34–43 (ENRVNLSENT) and 68–97 (SGEN…PKTS). A Phosphothreonine modification is found at Thr-43. The segment covering 107–117 (SQSPPRSPGRS) has biased composition (low complexity). Residue Ser-113 is modified to Phosphoserine. An ATP-binding site is contributed by 185-192 (GPNGSGKS). Residues 345-673 (GQIENLNEVC…SKAQNKSKVL (329 aa)) adopt a coiled-coil conformation. The SMC hinge domain maps to 686–799 (NGFHGRLGDL…QNLKQANNVA (114 aa)). 2 coiled-coil regions span residues 849-1172 (EEVD…CDNY) and 1224-1263 (VLEE…KKKR).

This sequence belongs to the SMC family. SMC4 subfamily. As to quaternary structure, forms a heterodimer with SMC2. Component of the condensin complex, which contains the SMC2 and SMC4 heterodimer, and three non SMC subunits that probably regulate the complex: BRN1, YCS4 and YCG1/YCS5.

The protein resides in the nucleus. Its subcellular location is the cytoplasm. The protein localises to the chromosome. Central component of the condensin complex, a complex required for conversion of interphase chromatin into mitotic-like condense chromosomes. The condensin complex probably introduces positive supercoils into relaxed DNA in the presence of type I topoisomerases and converts nicked DNA into positive knotted forms in the presence of type II topoisomerases. The sequence is that of Structural maintenance of chromosomes protein 4 (SMC4) from Saccharomyces cerevisiae (strain ATCC 204508 / S288c) (Baker's yeast).